A 103-amino-acid chain; its full sequence is Pro-glucagon (103 aa).

It belongs to the glucagon family.

It is found in the secreted. Its function is as follows. Plays a key role in glucose metabolism and homeostasis. Regulates blood glucose by increasing gluconeogenesis and decreasing glycolysis. This chain is Pro-glucagon (gcg), found in Aquarana catesbeiana (American bullfrog).